The primary structure comprises 312 residues: uncharacterized protein (312 aa).

Belongs to the asfivirus CP312R family.

The protein localises to the virion. This is an uncharacterized protein from African swine fever virus (strain Badajoz 1971 Vero-adapted) (Ba71V).